We begin with the raw amino-acid sequence, 51 residues long: Large ribosomal subunit protein eL39 (51 aa).

This sequence belongs to the eukaryotic ribosomal protein eL39 family. As to quaternary structure, part of the 50S ribosomal subunit.

The chain is Large ribosomal subunit protein eL39 from Pyrococcus furiosus (strain ATCC 43587 / DSM 3638 / JCM 8422 / Vc1).